Consider the following 447-residue polypeptide: uncharacterized protein (447 aa).

To E.coli plasmid IncP-alpha RP4 protein TraN.

This is an uncharacterized protein from Haemophilus influenzae (strain ATCC 51907 / DSM 11121 / KW20 / Rd).